Consider the following 133-residue polypeptide: DNA-directed RNA polymerase subunit omega (133 aa).

This sequence belongs to the RNA polymerase subunit omega family. In terms of assembly, the RNAP catalytic core consists of 2 alpha, 1 beta, 1 beta' and 1 omega subunit. When a sigma factor is associated with the core the holoenzyme is formed, which can initiate transcription.

It carries out the reaction RNA(n) + a ribonucleoside 5'-triphosphate = RNA(n+1) + diphosphate. Its function is as follows. Promotes RNA polymerase assembly. Latches the N- and C-terminal regions of the beta' subunit thereby facilitating its interaction with the beta and alpha subunits. The sequence is that of DNA-directed RNA polymerase subunit omega from Mesorhizobium japonicum (strain LMG 29417 / CECT 9101 / MAFF 303099) (Mesorhizobium loti (strain MAFF 303099)).